The sequence spans 694 residues: Elongation factor G (694 aa).

The tr-type G domain maps to 6–288 (KLYRNIGIAA…GVIEYLPSPT (283 aa)). GTP is bound by residues 15–22 (AHVDAGKT), 86–90 (DTPGH), and 140–143 (NKMD).

It belongs to the TRAFAC class translation factor GTPase superfamily. Classic translation factor GTPase family. EF-G/EF-2 subfamily.

It localises to the cytoplasm. Functionally, catalyzes the GTP-dependent ribosomal translocation step during translation elongation. During this step, the ribosome changes from the pre-translocational (PRE) to the post-translocational (POST) state as the newly formed A-site-bound peptidyl-tRNA and P-site-bound deacylated tRNA move to the P and E sites, respectively. Catalyzes the coordinated movement of the two tRNA molecules, the mRNA and conformational changes in the ribosome. This chain is Elongation factor G, found in Legionella pneumophila (strain Corby).